Consider the following 499-residue polypeptide: Probable folate-biopterin transporter 2 (499 aa).

12 helical membrane passes run 43-63 (WSFVFGVVSLYGINQGLGGSL), 92-112 (IPWIIKPLWGILTDVLPIFGF), 116-136 (PYFILAGVLGVVSLLFISLHS), 141-161 (YLALFWMTISSAAMAIADVTI), 185-205 (LSSSIGALLGFFMSGILVHLV), 209-229 (GVFGLLTFPFALVSVVGIVFS), 266-286 (LYMYISLTLGLNIHEGLFYWF), 302-322 (FILSIGSIGSILAATLYQLVL), 330-350 (LCLWTQLLFALSGMLDLILVF), 354-374 (LKFGLPDYLFIVVDEIVSQMI), 399-419 (FALLMSIDNAGLMTSSWLGGI), and 435-455 (WLAVLVRNVMRLLPLCFLFLV).

This sequence belongs to the major facilitator superfamily. Folate-biopterin transporter (TC 2.A.71) family.

It localises to the membrane. In terms of biological role, could mediate folate transport. The chain is Probable folate-biopterin transporter 2 from Arabidopsis thaliana (Mouse-ear cress).